Here is a 273-residue protein sequence, read N- to C-terminus: MNASVVLNLHLISDSTCETVAAVAKSALEHFRSIEVNEFVWSFINSCEQIDKIMSLIEHDKYNFIMYTMFDDDIRRYLKQKAEVQEIPCIPVLSRVIRELSCYLHVKKDPYVNTGMGLDDEYFTRIDAINYTIAHDDGQNLWDIDKADIIILGVSRTSKSPTSIYLAYRGYRVVNIPLVNSINLSVDLSSMKNKLIVGLTIDIDRLIEIRKTRLVSMRNQNNCQYVDYEHVLVEIKETKRICMQNGWPIIDVTQKSVEEIAATIIQYFNKMQH.

Residue 153-160 (GVSRTSKS) participates in ADP binding.

Belongs to the pyruvate, phosphate/water dikinase regulatory protein family. PDRP subfamily.

The catalysed reaction is N(tele)-phospho-L-histidyl/L-threonyl-[pyruvate, phosphate dikinase] + ADP = N(tele)-phospho-L-histidyl/O-phospho-L-threonyl-[pyruvate, phosphate dikinase] + AMP + H(+). It carries out the reaction N(tele)-phospho-L-histidyl/O-phospho-L-threonyl-[pyruvate, phosphate dikinase] + phosphate + H(+) = N(tele)-phospho-L-histidyl/L-threonyl-[pyruvate, phosphate dikinase] + diphosphate. Bifunctional serine/threonine kinase and phosphorylase involved in the regulation of the pyruvate, phosphate dikinase (PPDK) by catalyzing its phosphorylation/dephosphorylation. In Ehrlichia canis (strain Jake), this protein is Putative pyruvate, phosphate dikinase regulatory protein.